The sequence spans 487 residues: Ribosomal protein uS12 methylthiotransferase RimO (487 aa).

The 112-residue stretch at 38 to 149 (PTVAFAHLGC…IVEVLEQVEA (112 aa)) folds into the MTTase N-terminal domain. The [4Fe-4S] cluster site is built by Cys-47, Cys-83, Cys-112, Cys-187, Cys-191, and Cys-194. The Radical SAM core domain maps to 173-402 (TTSEAVAYLK…MEAQQAISAE (230 aa)). The TRAM domain maps to 405 to 476 (GAWVGRIVDV…IYDLEGEVVG (72 aa)).

This sequence belongs to the methylthiotransferase family. RimO subfamily. [4Fe-4S] cluster serves as cofactor.

It localises to the cytoplasm. The enzyme catalyses L-aspartate(89)-[ribosomal protein uS12]-hydrogen + (sulfur carrier)-SH + AH2 + 2 S-adenosyl-L-methionine = 3-methylsulfanyl-L-aspartate(89)-[ribosomal protein uS12]-hydrogen + (sulfur carrier)-H + 5'-deoxyadenosine + L-methionine + A + S-adenosyl-L-homocysteine + 2 H(+). Catalyzes the methylthiolation of an aspartic acid residue of ribosomal protein uS12. This is Ribosomal protein uS12 methylthiotransferase RimO from Synechococcus sp. (strain RCC307).